The sequence spans 279 residues: Undecaprenyl-diphosphatase (279 aa).

The next 6 helical transmembrane spans lie at phenylalanine 45 to tyrosine 65, tryptophan 85 to phenylalanine 105, phenylalanine 113 to valine 133, serine 188 to leucine 208, leucine 226 to leucine 246, and phenylalanine 255 to valine 275.

It belongs to the UppP family.

Its subcellular location is the cell membrane. The enzyme catalyses di-trans,octa-cis-undecaprenyl diphosphate + H2O = di-trans,octa-cis-undecaprenyl phosphate + phosphate + H(+). Its function is as follows. Catalyzes the dephosphorylation of undecaprenyl diphosphate (UPP). Confers resistance to bacitracin. In Streptococcus agalactiae serotype Ia (strain ATCC 27591 / A909 / CDC SS700), this protein is Undecaprenyl-diphosphatase.